Consider the following 248-residue polypeptide: Tabinhibitin 10 (248 aa).

An N-terminal signal peptide occupies residues 1–22 (MTLKRIFCAALALIVLQSVASA). Residues 66–208 (LQKTNWLRGV…NYKGAFHCSL (143 aa)) form the SCP domain. A Cell attachment site motif is present at residues 221–223 (RGD).

It belongs to the CRISP family. As to expression, expressed in salivary glands.

It is found in the secreted. Functionally, inhibits platelet aggregation induced by all agonists tested (ADP, arachidonic acid, the thromboxane A2 analog U46619, thrombin, and snake venom snaclecs (TMVA that activates platelet through GPIB, and stejnulxin that specifically acts through GPVI (GP6))). May act by competing with fibrinogen for binding to glycoprotein IIb/IIIa (ITGA2B/ITGB3). The sequence is that of Tabinhibitin 10 from Tabanus yao (Horsefly).